Consider the following 122-residue polypeptide: Large ribosomal subunit protein uL14c (122 aa).

This sequence belongs to the universal ribosomal protein uL14 family. In terms of assembly, part of the 50S ribosomal subunit.

It is found in the plastid. It localises to the chloroplast. Its function is as follows. Binds to 23S rRNA. This is Large ribosomal subunit protein uL14c from Chaetosphaeridium globosum (Charophycean green alga).